A 439-amino-acid polypeptide reads, in one-letter code: Microfibrillar-associated protein 1 (439 aa).

Polar residues predominate over residues 1–17; it reads MSVPSSLMKQPPIQSTA. The disordered stretch occupies residues 1-200; sequence MSVPSSLMKQ…SEDEMEPRLK (200 aa). An N-acetylserine modification is found at Ser2. The span at 23–34 shows a compositional bias: basic and acidic residues; it reads RNEKGEISMEKV. Residues Ser52 and Ser53 each carry the phosphoserine modification. Over residues 61–70 the composition is skewed to basic and acidic residues; sequence QFIKKAKEQE. Residue Lys67 forms a Glycyl lysine isopeptide (Lys-Gly) (interchain with G-Cter in SUMO2) linkage. Residues 71–81 are compositionally biased toward acidic residues; the sequence is AEPEEQEEDSS. Phosphoserine is present on residues Ser94, Ser116, Ser118, Ser132, and Ser133. 2 stretches are compositionally biased toward acidic residues: residues 112 to 122 and 131 to 144; these read VVGESDSEVEG and DSSE…DEEE. Residues 145-163 show a composition bias toward basic and acidic residues; that stretch reads IERRRGMMRQRAQERKNEE. The span at 178–195 shows a compositional bias: acidic residues; that stretch reads ESESESEYEEYTDSEDEM. Residue Lys249 forms a Glycyl lysine isopeptide (Lys-Gly) (interchain with G-Cter in SUMO2) linkage. Thr267 bears the Phosphothreonine mark. Lys357 participates in a covalent cross-link: Glycyl lysine isopeptide (Lys-Gly) (interchain with G-Cter in SUMO2). Residue Ser361 is modified to Phosphoserine. Glycyl lysine isopeptide (Lys-Gly) (interchain with G-Cter in SUMO2) cross-links involve residues Lys371, Lys381, Lys415, and Lys418. Ser432 bears the Phosphoserine mark.

This sequence belongs to the MFAP1 family. Component of the spliceosome B complex. Interacts with PRPF38A (via N-terminal interaction domain).

The protein localises to the nucleus. Its function is as follows. Involved in pre-mRNA splicing as a component of the spliceosome. In Bos taurus (Bovine), this protein is Microfibrillar-associated protein 1.